We begin with the raw amino-acid sequence, 548 residues long: T-complex protein 1 subunit theta (548 aa).

Alanine 2 bears the N-acetylalanine mark. Phosphoserine is present on serine 23. A Phosphotyrosine modification is found at tyrosine 30. Residues tyrosine 47 and glycine 48 each coordinate ADP. Aspartate 99 is a Mg(2+) binding site. 4 residues coordinate ADP: glycine 100, threonine 101, asparagine 102, and phenylalanine 103. Glycine 100, threonine 101, and asparagine 102 together coordinate ATP. Serine 162 bears the Phosphoserine mark. The ADP site is built by methionine 169, serine 170, and lysine 171. Positions 170 and 171 each coordinate ATP. Serine 213 is subject to Phosphoserine. Glycyl lysine isopeptide (Lys-Gly) (interchain with G-Cter in SUMO2) cross-links involve residues lysine 224, lysine 254, and lysine 260. Residues serine 269 and serine 317 each carry the phosphoserine modification. Residues lysine 318 and lysine 400 each carry the N6-acetyllysine modification. Residue glycine 412 participates in ADP binding. Glycine 412 is a binding site for ATP. Lysine 459 participates in a covalent cross-link: Glycyl lysine isopeptide (Lys-Gly) (interchain with G-Cter in SUMO1). At lysine 466 the chain carries N6-acetyllysine. Aspartate 499 contacts ADP. Positions 499 and 504 each coordinate ATP. Phosphotyrosine is present on tyrosine 505. Positions 529-548 (PAGGPKPPSGKKDWDDDQND) are disordered. Lysine 534 is covalently cross-linked (Glycyl lysine isopeptide (Lys-Gly) (interchain with G-Cter in SUMO2)). Serine 537 is subject to Phosphoserine. Residue lysine 539 forms a Glycyl lysine isopeptide (Lys-Gly) (interchain with G-Cter in SUMO2) linkage.

Belongs to the TCP-1 chaperonin family. In terms of assembly, component of the chaperonin-containing T-complex (TRiC), a hexadecamer composed of two identical back-to-back stacked rings enclosing a protein folding chamber. Each ring is made up of eight different subunits: TCP1/CCT1, CCT2, CCT3, CCT4, CCT5, CCT6A/CCT6, CCT7, CCT8. Interacts with PACRG. Interacts with DNAAF4. Interacts with synaptic plasticity regulator PANTS.

Its subcellular location is the cytoplasm. It localises to the cytoskeleton. It is found in the microtubule organizing center. The protein resides in the centrosome. The protein localises to the cilium basal body. It catalyses the reaction ATP + H2O = ADP + phosphate + H(+). Functionally, component of the chaperonin-containing T-complex (TRiC), a molecular chaperone complex that assists the folding of actin, tubulin and other proteins upon ATP hydrolysis. The TRiC complex mediates the folding of WRAP53/TCAB1, thereby regulating telomere maintenance. As part of the TRiC complex may play a role in the assembly of BBSome, a complex involved in ciliogenesis regulating transports vesicles to the cilia. The polypeptide is T-complex protein 1 subunit theta (CCT8) (Macaca fascicularis (Crab-eating macaque)).